The sequence spans 141 residues: Holo-[acyl-carrier-protein] synthase (141 aa).

Positions 8 and 61 each coordinate Mg(2+).

The protein belongs to the P-Pant transferase superfamily. AcpS family. Mg(2+) is required as a cofactor.

Its subcellular location is the cytoplasm. It carries out the reaction apo-[ACP] + CoA = holo-[ACP] + adenosine 3',5'-bisphosphate + H(+). Functionally, transfers the 4'-phosphopantetheine moiety from coenzyme A to a Ser of acyl-carrier-protein. In Rhodopseudomonas palustris (strain HaA2), this protein is Holo-[acyl-carrier-protein] synthase.